We begin with the raw amino-acid sequence, 74 residues long: Protein YkgV (74 aa).

This chain is Protein YkgV, found in Escherichia coli (strain K12).